The chain runs to 105 residues: Small ribosomal subunit protein uS10 (105 aa).

Belongs to the universal ribosomal protein uS10 family. Part of the 30S ribosomal subunit.

Functionally, involved in the binding of tRNA to the ribosomes. This chain is Small ribosomal subunit protein uS10, found in Rickettsia rickettsii (strain Iowa).